We begin with the raw amino-acid sequence, 939 residues long: Valine--tRNA ligase (939 aa).

Residues Pro47–His57 carry the 'HIGH' region motif. Residues Lys563–Ser567 carry the 'KMSKS' region motif. An ATP-binding site is contributed by Lys566. A coiled-coil region spans residues Ala873–Leu939.

This sequence belongs to the class-I aminoacyl-tRNA synthetase family. ValS type 1 subfamily. In terms of assembly, monomer.

The protein localises to the cytoplasm. The catalysed reaction is tRNA(Val) + L-valine + ATP = L-valyl-tRNA(Val) + AMP + diphosphate. Catalyzes the attachment of valine to tRNA(Val). As ValRS can inadvertently accommodate and process structurally similar amino acids such as threonine, to avoid such errors, it has a 'posttransfer' editing activity that hydrolyzes mischarged Thr-tRNA(Val) in a tRNA-dependent manner. In Chlamydia muridarum (strain MoPn / Nigg), this protein is Valine--tRNA ligase.